We begin with the raw amino-acid sequence, 20 residues long: Toxin CpTx-4a (20 aa).

This sequence belongs to the spider toxin CSTX family. Expressed by the venom gland.

The protein resides in the secreted. Functionally, spider venom toxin that exhibits cytolytic activity by forming an alpha-helix across the membrane. Lethal to insect larvae. The sequence is that of Toxin CpTx-4a from Cheiracanthium punctorium (Yellow sac spider).